A 177-amino-acid chain; its full sequence is Ribosome maturation factor RimP (177 aa).

This sequence belongs to the RimP family.

The protein resides in the cytoplasm. Functionally, required for maturation of 30S ribosomal subunits. The sequence is that of Ribosome maturation factor RimP from Mycobacterium marinum (strain ATCC BAA-535 / M).